The chain runs to 196 residues: ATP-dependent Clp protease proteolytic subunit (196 aa).

S101 serves as the catalytic Nucleophile. H126 is an active-site residue.

It belongs to the peptidase S14 family. In terms of assembly, component of the chloroplastic Clp protease core complex.

It localises to the plastid. Its subcellular location is the chloroplast stroma. The catalysed reaction is Hydrolysis of proteins to small peptides in the presence of ATP and magnesium. alpha-casein is the usual test substrate. In the absence of ATP, only oligopeptides shorter than five residues are hydrolyzed (such as succinyl-Leu-Tyr-|-NHMec, and Leu-Tyr-Leu-|-Tyr-Trp, in which cleavage of the -Tyr-|-Leu- and -Tyr-|-Trp bonds also occurs).. Cleaves peptides in various proteins in a process that requires ATP hydrolysis. Has a chymotrypsin-like activity. Plays a major role in the degradation of misfolded proteins. In Gossypium hirsutum (Upland cotton), this protein is ATP-dependent Clp protease proteolytic subunit.